A 148-amino-acid polypeptide reads, in one-letter code: Probable DNA-directed RNA polymerases I, II, and III subunit RPABC3 (148 aa).

A non-specific ssDNA binding region spans residues 16–40 (DPDGKKFDRVSRYFCDAESFKMELI).

It belongs to the eukaryotic RPB8 RNA polymerase subunit family. In terms of assembly, component of the RNA polymerase I (Pol I), RNA polymerase II (Pol II) and RNA polymerase III (Pol III) complexes consisting of at least 13, 12 and 17 subunits, respectively. Directly interacts with POLR2A.

It is found in the nucleus. Functionally, DNA-dependent RNA polymerase catalyzes the transcription of DNA into RNA using the four ribonucleoside triphosphates as substrates. Common component of RNA polymerases I, II and III which synthesize ribosomal RNA precursors, mRNA precursors and many functional non-coding RNAs, and small RNAs, such as 5S rRNA and tRNAs, respectively. This Caenorhabditis briggsae protein is Probable DNA-directed RNA polymerases I, II, and III subunit RPABC3.